Consider the following 177-residue polypeptide: Large ribosomal subunit protein uL6 (177 aa).

Belongs to the universal ribosomal protein uL6 family. Part of the 50S ribosomal subunit.

Functionally, this protein binds to the 23S rRNA, and is important in its secondary structure. It is located near the subunit interface in the base of the L7/L12 stalk, and near the tRNA binding site of the peptidyltransferase center. The chain is Large ribosomal subunit protein uL6 from Rickettsia peacockii (strain Rustic).